Here is a 109-residue protein sequence, read N- to C-terminus: Cell division suppressor protein YneA (109 aa).

Residues 40–94 (STVTITKGDTLWELSNKYHNHHHLTTNEFVKWVEDVNDLNSDTAQSLSPGDKLYI) form the LysM domain.

This sequence belongs to the YneA family.

It localises to the cytoplasm. In terms of biological role, inhibits cell division during the SOS response. Affects a later stage of the cell division protein assembly, after the assembly of the Z ring, by probably suppressing recruitment of FtsL and/or DivIC to the division machinery. This is Cell division suppressor protein YneA from Priestia megaterium (strain DSM 319 / IMG 1521) (Bacillus megaterium).